The sequence spans 477 residues: Bifunctional protein HldE (477 aa).

The interval Met1–Glu318 is ribokinase. ATP is bound at residue Asn194–Glu197. Asp263 is a catalytic residue. The segment at Phe343–Glu477 is cytidylyltransferase.

This sequence in the N-terminal section; belongs to the carbohydrate kinase PfkB family. In the C-terminal section; belongs to the cytidylyltransferase family. In terms of assembly, homodimer.

It carries out the reaction D-glycero-beta-D-manno-heptose 7-phosphate + ATP = D-glycero-beta-D-manno-heptose 1,7-bisphosphate + ADP + H(+). The enzyme catalyses D-glycero-beta-D-manno-heptose 1-phosphate + ATP + H(+) = ADP-D-glycero-beta-D-manno-heptose + diphosphate. It functions in the pathway nucleotide-sugar biosynthesis; ADP-L-glycero-beta-D-manno-heptose biosynthesis; ADP-L-glycero-beta-D-manno-heptose from D-glycero-beta-D-manno-heptose 7-phosphate: step 1/4. It participates in nucleotide-sugar biosynthesis; ADP-L-glycero-beta-D-manno-heptose biosynthesis; ADP-L-glycero-beta-D-manno-heptose from D-glycero-beta-D-manno-heptose 7-phosphate: step 3/4. In terms of biological role, catalyzes the phosphorylation of D-glycero-D-manno-heptose 7-phosphate at the C-1 position to selectively form D-glycero-beta-D-manno-heptose-1,7-bisphosphate. Its function is as follows. Catalyzes the ADP transfer from ATP to D-glycero-beta-D-manno-heptose 1-phosphate, yielding ADP-D-glycero-beta-D-manno-heptose. This Pseudomonas fluorescens (strain ATCC BAA-477 / NRRL B-23932 / Pf-5) protein is Bifunctional protein HldE.